The chain runs to 781 residues: Dynamin-related protein dnm1 (781 aa).

Residues 23-328 (FLDLPSIVVV…LVSHIRERLP (306 aa)) enclose the Dynamin-type G domain. The G1 motif stretch occupies residues 33-40 (GSQSCGKS). GTP is bound at residue 33–40 (GSQSCGKS). A G2 motif region spans residues 59 to 61 (VTR). Residues 76 to 103 (KNNHDEESTSDNNSEETSAAGETGSLEG) form a disordered region. The tract at residues 170–173 (DLPG) is G3 motif. Residues 170 to 174 (DLPGL) and 239 to 242 (TKLD) each bind GTP. The tract at residues 239–242 (TKLD) is G4 motif. Residues 269–272 (VNRS) are G5 motif. In terms of domain architecture, GED spans 694-781 (VDLIKELITS…QANKIISTVF (88 aa)).

The protein belongs to the TRAFAC class dynamin-like GTPase superfamily. Dynamin/Fzo/YdjA family.

The protein localises to the cytoplasm. The protein resides in the mitochondrion outer membrane. It carries out the reaction GTP + H2O = GDP + phosphate + H(+). In terms of biological role, microtubule-associated force-producing protein that mediates mitochondrial fission during interphasic growth and at cell division. Fission of mitochondria occurs in many cell types and constitutes an important step in mitochondria morphology, which is balanced between fusion and fission. With vps1, acts redundantly in peroxisome biogenesis, which is under cell cycle control. This is Dynamin-related protein dnm1 (dnm1) from Schizosaccharomyces pombe (strain 972 / ATCC 24843) (Fission yeast).